A 697-amino-acid polypeptide reads, in one-letter code: Mediator of RNA polymerase II transcription subunit 16 (697 aa).

4 WD repeats span residues 68–107, 199–241, 264–308, and 622–663; these read GHQEVITCLEWDQSGSRLLSADADGRIKCWGMTDHLANSW, RCRV…VSEK, DKFP…LPLN, and NQGS…CLPV.

This sequence belongs to the Mediator complex subunit 16 family. In terms of assembly, component of the Mediator complex.

It is found in the nucleus. Its function is as follows. Component of the Mediator complex, a coactivator involved in the regulated transcription of nearly all RNA polymerase II-dependent genes. Mediator functions as a bridge to convey information from gene-specific regulatory proteins to the basal RNA polymerase II transcription machinery. Mediator is recruited to promoters by direct interactions with regulatory proteins and serves as a scaffold for the assembly of a functional preinitiation complex with RNA polymerase II and the general transcription factors. This chain is Mediator of RNA polymerase II transcription subunit 16 (med16), found in Xenopus laevis (African clawed frog).